Consider the following 86-residue polypeptide: Large ribosomal subunit protein uL23 (86 aa).

It belongs to the universal ribosomal protein uL23 family. As to quaternary structure, part of the 50S ribosomal subunit. Contacts protein L29.

Its function is as follows. Binds to 23S rRNA. One of the proteins that surrounds the polypeptide exit tunnel on the outside of the ribosome. This Methanococcus maripaludis (strain C5 / ATCC BAA-1333) protein is Large ribosomal subunit protein uL23.